Here is a 721-residue protein sequence, read N- to C-terminus: Glucans biosynthesis glucosyltransferase H (721 aa).

The next 6 membrane-spanning stretches (helical) occupy residues 52–72 (CSWRRVFVVGFALLISAFAIF), 97–117 (NFCWIALAFSSSIAGFFVLAS), 412–432 (SPFWLLLILSGLLLALQAHFI), 459–479 (FYITMGILFSPKIFGLLLLMF), 505–525 (ALVAPIMMLIHCGAVVSILFG), and 570–590 (LLAWMSPALIGLWFSVPLSGI).

This sequence belongs to the glycosyltransferase 2 family. OpgH subfamily.

It localises to the cell inner membrane. It participates in glycan metabolism; osmoregulated periplasmic glucan (OPG) biosynthesis. Involved in the biosynthesis of osmoregulated periplasmic glucans (OPGs). This is Glucans biosynthesis glucosyltransferase H from Vibrio cholerae serotype O1 (strain ATCC 39541 / Classical Ogawa 395 / O395).